Reading from the N-terminus, the 158-residue chain is MSRSQKNDNFIDKTFTILADVLVKLLPTSQNAKKAFSYYREGMAAQAEGEYAQALESYYHALEFEEDVIDRSYIIYNIGLIYASNGEDEQALEYYHQALELNPRLVQALNNIAVIYHKQGMTYQDEQLLQKAAAYWRKAIQLAPGQYLEAQNWLKNMV.

3 TPR repeats span residues 35-68 (AFSY…EEDV), 72-105 (SYII…NPRL), and 113-146 (AVIY…APGQ).

The protein belongs to the Ycf3 family.

It localises to the plastid. Its subcellular location is the chloroplast thylakoid membrane. Its function is as follows. Essential for the assembly of the photosystem I (PSI) complex. May act as a chaperone-like factor to guide the assembly of the PSI subunits. The chain is Photosystem I assembly protein Ycf3 from Cyanidioschyzon merolae (strain NIES-3377 / 10D) (Unicellular red alga).